The following is a 366-amino-acid chain: Anhydro-N-acetylmuramic acid kinase (366 aa).

Residue 10-17 (GTSMDGID) coordinates ATP.

Belongs to the anhydro-N-acetylmuramic acid kinase family.

It carries out the reaction 1,6-anhydro-N-acetyl-beta-muramate + ATP + H2O = N-acetyl-D-muramate 6-phosphate + ADP + H(+). The protein operates within amino-sugar metabolism; 1,6-anhydro-N-acetylmuramate degradation. It functions in the pathway cell wall biogenesis; peptidoglycan recycling. Catalyzes the specific phosphorylation of 1,6-anhydro-N-acetylmuramic acid (anhMurNAc) with the simultaneous cleavage of the 1,6-anhydro ring, generating MurNAc-6-P. Is required for the utilization of anhMurNAc either imported from the medium or derived from its own cell wall murein, and thus plays a role in cell wall recycling. In Legionella pneumophila subsp. pneumophila (strain Philadelphia 1 / ATCC 33152 / DSM 7513), this protein is Anhydro-N-acetylmuramic acid kinase.